Consider the following 600-residue polypeptide: Dihydroxy-acid dehydratase (600 aa).

Position 82 (D82) interacts with Mg(2+). C123 contributes to the [2Fe-2S] cluster binding site. 2 residues coordinate Mg(2+): D124 and K125. An N6-carboxylysine modification is found at K125. C192 serves as a coordination point for [2Fe-2S] cluster. E489 contacts Mg(2+). S515 serves as the catalytic Proton acceptor.

The protein belongs to the IlvD/Edd family. In terms of assembly, homodimer. It depends on [2Fe-2S] cluster as a cofactor. Mg(2+) is required as a cofactor.

The enzyme catalyses (2R)-2,3-dihydroxy-3-methylbutanoate = 3-methyl-2-oxobutanoate + H2O. It catalyses the reaction (2R,3R)-2,3-dihydroxy-3-methylpentanoate = (S)-3-methyl-2-oxopentanoate + H2O. It functions in the pathway amino-acid biosynthesis; L-isoleucine biosynthesis; L-isoleucine from 2-oxobutanoate: step 3/4. The protein operates within amino-acid biosynthesis; L-valine biosynthesis; L-valine from pyruvate: step 3/4. Functions in the biosynthesis of branched-chain amino acids. Catalyzes the dehydration of (2R,3R)-2,3-dihydroxy-3-methylpentanoate (2,3-dihydroxy-3-methylvalerate) into 2-oxo-3-methylpentanoate (2-oxo-3-methylvalerate) and of (2R)-2,3-dihydroxy-3-methylbutanoate (2,3-dihydroxyisovalerate) into 2-oxo-3-methylbutanoate (2-oxoisovalerate), the penultimate precursor to L-isoleucine and L-valine, respectively. The sequence is that of Dihydroxy-acid dehydratase from Phocaeicola vulgatus (strain ATCC 8482 / DSM 1447 / JCM 5826 / CCUG 4940 / NBRC 14291 / NCTC 11154) (Bacteroides vulgatus).